The chain runs to 315 residues: Protein FRA10AC1 (315 aa).

N-acetylmethionine is present on M1. The interval 1 to 28 (MHGHGGYDSDFSDDERCGESSKRKKRTV) is disordered. S9 and S12 each carry phosphoserine. K36 carries the N6-acetyllysine modification. Positions 226 to 235 (EIKSKKRKDK) are enriched in basic residues. Residues 226 to 315 (EIKSKKRKDK…FDEYFQDLFL (90 aa)) form a disordered region. The span at 236–245 (TKKDCEESSH) shows a compositional bias: basic and acidic residues. S251, S252, S278, S283, and S285 each carry phosphoserine. The segment covering 268 to 278 (KKSEDSLLRNS) has biased composition (basic and acidic residues). Residues 301–315 (SQEEEFDEYFQDLFL) are compositionally biased toward acidic residues.

Interacts with ESS2. In terms of tissue distribution, ubiquitously expressed with higher expression in brain, heart, skeletal muscle, kidney and liver.

Its subcellular location is the nucleus. Functionally, may be involved in pre-mRNA splicing. The protein is Protein FRA10AC1 (FRA10AC1) of Homo sapiens (Human).